The primary structure comprises 501 residues: Probable cytosol aminopeptidase (501 aa).

The Mn(2+) site is built by Lys272 and Asp277. Lys284 is a catalytic residue. Residues Asp295, Asp354, and Glu356 each coordinate Mn(2+). Arg358 is a catalytic residue.

It belongs to the peptidase M17 family. The cofactor is Mn(2+).

It localises to the cytoplasm. It carries out the reaction Release of an N-terminal amino acid, Xaa-|-Yaa-, in which Xaa is preferably Leu, but may be other amino acids including Pro although not Arg or Lys, and Yaa may be Pro. Amino acid amides and methyl esters are also readily hydrolyzed, but rates on arylamides are exceedingly low.. The enzyme catalyses Release of an N-terminal amino acid, preferentially leucine, but not glutamic or aspartic acids.. Its function is as follows. Presumably involved in the processing and regular turnover of intracellular proteins. Catalyzes the removal of unsubstituted N-terminal amino acids from various peptides. This is Probable cytosol aminopeptidase from Buchnera aphidicola subsp. Baizongia pistaciae (strain Bp).